Reading from the N-terminus, the 367-residue chain is MTVTSQVKPEDEMLNWGRLILDGVSYSDMVGARDRPKEITWFDYWMSLANEYEQEAERKVALGHDLSAGELLMSAALCAQYAQFLWFDERRQKGQARKVELYQKAAPLLSPPAERHELVVDGIPMPVYVRIPEGPGPHPAVIMLGGLESTKEESFQMENLVLDRGMATATFDGPGQGEMFEYKRIAGDYEKYTSAVVDLLTKLEAIRNDAIGVLGRSLGGNYALKSAACEPRLAACISWGGFSDLDYWDLETPLTKESWKYVSKVDTLEEARLHVHAALETRDVLSQIACPTYILHGVHDEVPLSFVDTVLELVPAEHLNLVVEKDGDHCCHNLGIRPRLEMADWLYDVLVAGKKVAPTMKGWPLNG.

Catalysis depends on residues Glu-148, Ser-217, Asp-300, and His-329.

This sequence belongs to the AB hydrolase superfamily. Homodimer.

The enzyme catalyses 2,6-dihydroxypseudooxynicotine + H2O = 2,6-dihydroxypyridine + 4-(methylamino)butanoate + H(+). Its pathway is alkaloid degradation; nicotine degradation; 2,6-dihydroxypyridine and 4-(methylamino)butanoate from 6-hydroxypseudooxynicotine: step 2/2. Functionally, L-nicotine is used as a growth substrate. Plays a role in nicotine catabolism by cleaving a C-C bond in 2,6-dihydroxypseudooxynicotine. This Paenarthrobacter nicotinovorans (Arthrobacter nicotinovorans) protein is 2,6-dihydropseudooxynicotine hydrolase.